The chain runs to 158 residues: Ribosome maturation factor RimP (158 aa).

It belongs to the RimP family.

Its subcellular location is the cytoplasm. Its function is as follows. Required for maturation of 30S ribosomal subunits. The protein is Ribosome maturation factor RimP of Lactobacillus acidophilus (strain ATCC 700396 / NCK56 / N2 / NCFM).